The chain runs to 563 residues: Serine palmitoyltransferase 3 (563 aa).

Residues 1-29 (MANLNDSAVTNGTLHNPKTQQGKRQSTGC) are compositionally biased toward polar residues. A disordered region spans residues 1–32 (MANLNDSAVTNGTLHNPKTQQGKRQSTGCVKN). Residues 59–79 (PLYVYVLTYMGYGIGILFGYL) traverse the membrane as a helical segment. N6-(pyridoxal phosphate)lysine is present on lysine 371.

It belongs to the class-II pyridoxal-phosphate-dependent aminotransferase family. As to quaternary structure, component of the serine palmitoyltransferase (SPT) complex, which is composed of SPTLC1, SPTLC2 or SPTLC3 and SPTSSA or SPTSSB. The heterodimer consisting of SPTLC1 and SPTLC2/SPTLC3 forms the catalytic core of the enzyme, while SPTSSA or SPTSSB subunits determine substrate specificity. SPT also interacts with ORMDL proteins, especially ORMDL3, which negatively regulate SPT activity in the presence of ceramides. Pyridoxal 5'-phosphate is required as a cofactor. In terms of tissue distribution, expressed in white and brown adipose tissues.

The protein resides in the endoplasmic reticulum membrane. It carries out the reaction L-serine + hexadecanoyl-CoA + H(+) = 3-oxosphinganine + CO2 + CoA. The catalysed reaction is dodecanoyl-CoA + L-serine + H(+) = 3-oxotetradecasphinganine + CO2 + CoA. The enzyme catalyses tetradecanoyl-CoA + L-serine + H(+) = 3-oxohexadecasphinganine + CO2 + CoA. It catalyses the reaction octadecanoyl-CoA + L-serine + H(+) = 3-oxoeicosasphinganine + CO2 + CoA. It functions in the pathway lipid metabolism; sphingolipid metabolism. With respect to regulation, SPT complex catalytic activity is negatively regulated by ORMDL proteins, including ORMDL3, in the presence of ceramides. This mechanism allows to maintain ceramide levels at sufficient concentrations for the production of complex sphingolipids, but which prevents the accumulation of ceramides to levels that trigger apoptosis. In terms of biological role, component of the serine palmitoyltransferase multisubunit enzyme (SPT) that catalyzes the initial and rate-limiting step in sphingolipid biosynthesis by condensing L-serine and activated acyl-CoA (most commonly palmitoyl-CoA) to form long-chain bases. The SPT complex is composed of SPTLC1, SPTLC2 or SPTLC3 and SPTSSA or SPTSSB. Within this complex, the heterodimer consisting of SPTLC1 and SPTLC2/SPTLC3 forms the catalytic core. The composition of the serine palmitoyltransferase (SPT) complex determines the substrate preference. The SPTLC1-SPTLC2-SPTSSA complex shows a strong preference for C16-CoA substrate, while the SPTLC1-SPTLC3-SPTSSA isozyme uses both C14-CoA and C16-CoA as substrates, with a slight preference for C14-CoA. The SPTLC1-SPTLC2-SPTSSB complex shows a strong preference for C18-CoA substrate, while the SPTLC1-SPTLC3-SPTSSB isozyme displays an ability to use a broader range of acyl-CoAs, without apparent preference. This Mus musculus (Mouse) protein is Serine palmitoyltransferase 3.